The chain runs to 435 residues: Gamma-glutamyl phosphate reductase (435 aa).

It belongs to the gamma-glutamyl phosphate reductase family.

The protein localises to the cytoplasm. The enzyme catalyses L-glutamate 5-semialdehyde + phosphate + NADP(+) = L-glutamyl 5-phosphate + NADPH + H(+). Its pathway is amino-acid biosynthesis; L-proline biosynthesis; L-glutamate 5-semialdehyde from L-glutamate: step 2/2. In terms of biological role, catalyzes the NADPH-dependent reduction of L-glutamate 5-phosphate into L-glutamate 5-semialdehyde and phosphate. The product spontaneously undergoes cyclization to form 1-pyrroline-5-carboxylate. The polypeptide is Gamma-glutamyl phosphate reductase (Synechococcus sp. (strain CC9605)).